A 339-amino-acid chain; its full sequence is DNA-directed RNA polymerase subunit alpha (339 aa).

The segment at 1-233 is alpha N-terminal domain (alpha-NTD); that stretch reads MVREEVAGST…DLFLPFLHAE (233 aa). The segment at 264-339 is alpha C-terminal domain (alpha-CTD); sequence KKGIPLNCIF…IDLLKNKLSF (76 aa).

Belongs to the RNA polymerase alpha chain family. In plastids the minimal PEP RNA polymerase catalytic core is composed of four subunits: alpha, beta, beta', and beta''. When a (nuclear-encoded) sigma factor is associated with the core the holoenzyme is formed, which can initiate transcription.

It localises to the plastid. Its subcellular location is the chloroplast. It carries out the reaction RNA(n) + a ribonucleoside 5'-triphosphate = RNA(n+1) + diphosphate. In terms of biological role, DNA-dependent RNA polymerase catalyzes the transcription of DNA into RNA using the four ribonucleoside triphosphates as substrates. The sequence is that of DNA-directed RNA polymerase subunit alpha from Thinopyrum bessarabicum (Wheatgrass).